The chain runs to 305 residues: Mycothiol acetyltransferase (305 aa).

2 N-acetyltransferase domains span residues 10-153 (DRLD…LVVP) and 156-305 (ISLR…YARA). E38 is a binding site for 1D-myo-inositol 2-(L-cysteinylamino)-2-deoxy-alpha-D-glucopyranoside. 82–84 (LAV) contributes to the acetyl-CoA binding site. 1D-myo-inositol 2-(L-cysteinylamino)-2-deoxy-alpha-D-glucopyranoside contacts are provided by E183, K225, and E238. Acetyl-CoA-binding positions include 242-244 (VAI) and 249-255 (QGRGLGR). Residue Y276 coordinates 1D-myo-inositol 2-(L-cysteinylamino)-2-deoxy-alpha-D-glucopyranoside. 281–286 (NESALH) is a binding site for acetyl-CoA.

Belongs to the acetyltransferase family. MshD subfamily. As to quaternary structure, monomer.

The catalysed reaction is 1D-myo-inositol 2-(L-cysteinylamino)-2-deoxy-alpha-D-glucopyranoside + acetyl-CoA = mycothiol + CoA + H(+). Catalyzes the transfer of acetyl from acetyl-CoA to desacetylmycothiol (Cys-GlcN-Ins) to form mycothiol. In Rhodococcus jostii (strain RHA1), this protein is Mycothiol acetyltransferase.